Here is a 401-residue protein sequence, read N- to C-terminus: Imidazolonepropionase (401 aa).

Residues His66 and His68 each contribute to the Fe(3+) site. Residues His66 and His68 each coordinate Zn(2+). The 4-imidazolone-5-propanoate site is built by Arg75, Tyr138, and His171. Tyr138 contacts N-formimidoyl-L-glutamate. His236 is a binding site for Fe(3+). Zn(2+) is bound at residue His236. A 4-imidazolone-5-propanoate-binding site is contributed by Gln239. Fe(3+) is bound at residue Asp311. Residue Asp311 coordinates Zn(2+). Residues Asn313 and Gly315 each contribute to the N-formimidoyl-L-glutamate site. Thr316 contacts 4-imidazolone-5-propanoate.

The protein belongs to the metallo-dependent hydrolases superfamily. HutI family. Requires Zn(2+) as cofactor. Fe(3+) serves as cofactor.

It is found in the cytoplasm. The catalysed reaction is 4-imidazolone-5-propanoate + H2O = N-formimidoyl-L-glutamate. It participates in amino-acid degradation; L-histidine degradation into L-glutamate; N-formimidoyl-L-glutamate from L-histidine: step 3/3. Functionally, catalyzes the hydrolytic cleavage of the carbon-nitrogen bond in imidazolone-5-propanoate to yield N-formimidoyl-L-glutamate. It is the third step in the universal histidine degradation pathway. This Pseudomonas savastanoi pv. phaseolicola (strain 1448A / Race 6) (Pseudomonas syringae pv. phaseolicola (strain 1448A / Race 6)) protein is Imidazolonepropionase.